A 566-amino-acid chain; its full sequence is Chaperone ric-8 (566 aa).

The protein belongs to the synembryn family. In terms of assembly, interacts with GDP-bound G-alpha proteins goa-1 and gpa-16. Does not interact with G-alpha proteins when they are in complex with subunits beta and gamma. Present throughout the nervous system in juveniles and adults (at protein level).

The protein resides in the cytoplasm. It is found in the cell cortex. Functionally, chaperone that specifically binds and folds some, but not all, nascent G alpha proteins prior to G protein heterotrimer formation, promoting their stability and activity. Also acts as a guanine nucleotide exchange factor (GEF) for G alpha proteins by stimulating exchange of bound GDP for free GTP. Able to facilitate synaptic transmission in the nervous system probably by activating G(q)-alpha (egl-30). Also able to activate the G(s)-alpha in synaptic signaling network. Plays a key role in asymmetric spindle positioning, a step for asymmetric cell division that generates cell diversity during development by activating G(i)-alpha protein goa-1 and gpa-16 independently of G-protein coupled receptors. While it acts as a GEF for goa-1, it has no GEF activity toward gpa-16. In addition to its GEF activity, it is required for cortical subcellular localization of G-alpha proteins such as gpa-16. Also required for the interaction of goa-1 and gpr-1/2, suggesting that it may act by generating G-alpha proteins free from G-beta-gamma subunits, enabling gpr-1/2 to mediate asymmetric cell division. The chain is Chaperone ric-8 (ric-8) from Caenorhabditis elegans.